Reading from the N-terminus, the 500-residue chain is Na(+)/H(+) antiporter NhaB (500 aa).

Helical transmembrane passes span 28-50 (FLMLNALVLWSVGPVAAGWLLVI), 58-78 (MALKCYPLMPGGLLLIEALLL), 96-116 (VILLLMFMVAGIYFMKDLLLF), 129-149 (ALLALMFCFLSAFLSAFLDAL), 150-170 (TVTAVIISAAVGFYSVYHRVA), 205-225 (LLMHGAVGTALGGVCTLVGEP), 241-261 (FFLKVAPVSLPVLVAGLVTCL), 311-331 (ILIAGLAFHIAEVGLIGLMVI), 350-370 (FKDAMPFTALLVVFFAVVAVI), 394-414 (MLFIANGLLSAISDNVFVATI), 449-469 (VATPNGQAAFLFLLTSAIAPL), and 477-497 (MVWMALPYTVVMGLLGWYAVS).

Belongs to the NhaB Na(+)/H(+) (TC 2.A.34) antiporter family.

It localises to the cell inner membrane. It catalyses the reaction 2 Na(+)(in) + 3 H(+)(out) = 2 Na(+)(out) + 3 H(+)(in). Na(+)/H(+) antiporter that extrudes sodium in exchange for external protons. This Pseudomonas fluorescens (strain Pf0-1) protein is Na(+)/H(+) antiporter NhaB.